We begin with the raw amino-acid sequence, 195 residues long: Peptidyl-tRNA hydrolase (195 aa).

Y17 lines the tRNA pocket. The active-site Proton acceptor is H22. 3 residues coordinate tRNA: F68, N70, and N116.

Belongs to the PTH family. Monomer.

It is found in the cytoplasm. It catalyses the reaction an N-acyl-L-alpha-aminoacyl-tRNA + H2O = an N-acyl-L-amino acid + a tRNA + H(+). Functionally, hydrolyzes ribosome-free peptidyl-tRNAs (with 1 or more amino acids incorporated), which drop off the ribosome during protein synthesis, or as a result of ribosome stalling. In terms of biological role, catalyzes the release of premature peptidyl moieties from peptidyl-tRNA molecules trapped in stalled 50S ribosomal subunits, and thus maintains levels of free tRNAs and 50S ribosomes. The sequence is that of Peptidyl-tRNA hydrolase from Shewanella denitrificans (strain OS217 / ATCC BAA-1090 / DSM 15013).